The following is a 95-amino-acid chain: Aspartyl/glutamyl-tRNA(Asn/Gln) amidotransferase subunit C (95 aa).

This sequence belongs to the GatC family. As to quaternary structure, heterotrimer of A, B and C subunits.

It catalyses the reaction L-glutamyl-tRNA(Gln) + L-glutamine + ATP + H2O = L-glutaminyl-tRNA(Gln) + L-glutamate + ADP + phosphate + H(+). The enzyme catalyses L-aspartyl-tRNA(Asn) + L-glutamine + ATP + H2O = L-asparaginyl-tRNA(Asn) + L-glutamate + ADP + phosphate + 2 H(+). Its function is as follows. Allows the formation of correctly charged Asn-tRNA(Asn) or Gln-tRNA(Gln) through the transamidation of misacylated Asp-tRNA(Asn) or Glu-tRNA(Gln) in organisms which lack either or both of asparaginyl-tRNA or glutaminyl-tRNA synthetases. The reaction takes place in the presence of glutamine and ATP through an activated phospho-Asp-tRNA(Asn) or phospho-Glu-tRNA(Gln). This is Aspartyl/glutamyl-tRNA(Asn/Gln) amidotransferase subunit C from Clostridium botulinum (strain ATCC 19397 / Type A).